A 410-amino-acid polypeptide reads, in one-letter code: Adenosylhomocysteinase (410 aa).

2 residues coordinate substrate: Asp117 and Glu142. 143 to 145 (TTT) is an NAD(+) binding site. Positions 172 and 176 each coordinate substrate. NAD(+) contacts are provided by residues Asn177, 206–211 (GYGYCG), Glu229, 285–287 (AGH), and Asn332.

Belongs to the adenosylhomocysteinase family. Requires NAD(+) as cofactor.

It is found in the cytoplasm. It catalyses the reaction S-adenosyl-L-homocysteine + H2O = L-homocysteine + adenosine. It participates in amino-acid biosynthesis; L-homocysteine biosynthesis; L-homocysteine from S-adenosyl-L-homocysteine: step 1/1. May play a key role in the regulation of the intracellular concentration of adenosylhomocysteine. The protein is Adenosylhomocysteinase of Thermoplasma volcanium (strain ATCC 51530 / DSM 4299 / JCM 9571 / NBRC 15438 / GSS1).